The following is an 859-amino-acid chain: Anoctamin-7 (859 aa).

Topologically, residues 1 to 297 (MLRGQAREED…YFAWLGFYTG (297 aa)) are cytoplasmic. The interval 25–50 (GCSYGSTAQASEAGKQQVAPSRVGSS) is disordered. The chain crosses the membrane as a helical span at residues 298–318 (WLLPAAVVGTVVFLVGCFLVF). The Extracellular segment spans residues 319 to 362 (SDIPTQELCHSSDSFDMCPLCSDCSFWLLSSACTLAQAGRLFDH). The chain crosses the membrane as a helical span at residues 363 to 383 (GGTVFFSLFMALWAVLLLEYW). At 384 to 441 (KRKNATLAYRWDCSDYEDIEERPRPQFAATAPMTALNPITGEDEPYFPEKNRVRRMLA) the chain is on the cytoplasmic side. A helical transmembrane segment spans residues 442–462 (GSVVLLMMVAVVIMCLVSVIL). Over 463–492 (YRAVMAIIVSRSDNAFLSAWASRIASLTGS) the chain is Extracellular. Residues 493–513 (VVNLVFILILSKVYVLLAQVL) form a helical membrane-spanning segment. Over 514 to 530 (TRWEMHRTQTEFEDAFT) the chain is Cytoplasmic. The helical transmembrane segment at 531–551 (LKVFIFQFVNFYASPVYIAFF) threads the bilayer. Residues 552–651 (KGRFVGYPGN…FHEYLEMVLQ (100 aa)) are Extracellular-facing. Residues 652–672 (FGFVTIFVAACPLAPLFALLN) form a helical membrane-spanning segment. The Cytoplasmic portion of the chain corresponds to 673 to 700 (NWVEIRLDARKFVCEYRRPVAERAQDIG). The chain crosses the membrane as a helical span at residues 701–721 (IWFHILTGLTHLAVISNAFLL). At 722–780 (AFSSDFLPRVYYSWTHAPDLHGFLNFTLARAPPTFTSAHNRTCRYRAFRDDDGHYSPTY) the chain is on the extracellular side. Residues asparagine 746 and asparagine 761 are each glycosylated (N-linked (GlcNAc...) asparagine). Residues 781–801 (WTLLAIRLAFVIVFEHVVFSI) form a helical membrane-spanning segment. Topologically, residues 802–859 (GRVLDLLVPDIPESVEIKVKREYYLAKQALAENEALLGATGVKDDQPPSSEPSLGLPA) are cytoplasmic.

Belongs to the anoctamin family. Highly expressed in the stomach. Expressed at low levels in small intestine and large intestine.

The protein localises to the cell membrane. The protein resides in the endoplasmic reticulum. The catalysed reaction is a 1,2-diacyl-sn-glycero-3-phospho-L-serine(in) = a 1,2-diacyl-sn-glycero-3-phospho-L-serine(out). It carries out the reaction a beta-D-galactosyl-(1&lt;-&gt;1')-N-acylsphing-4-enine(out) = a beta-D-galactosyl-(1&lt;-&gt;1')-N-acylsphing-4-enine(in). The enzyme catalyses a 1,2-diacyl-sn-glycero-3-phosphocholine(in) = a 1,2-diacyl-sn-glycero-3-phosphocholine(out). In terms of biological role, has calcium-dependent phospholipid scramblase activity; scrambles phosphatidylserine, phosphatidylcholine and galactosylceramide. Does not exhibit calcium-activated chloride channel (CaCC) activity. May play a role in cell-cell interactions. This Mus musculus (Mouse) protein is Anoctamin-7 (Ano7).